Consider the following 299-residue polypeptide: uncharacterized protein (299 aa).

The disordered stretch occupies residues 1 to 44; the sequence is MSDSNLTNPIKAFFHDEFPEQYQEPPGLQKNMKPVPDCGEKSYK. Residue 55-79 participates in NADP(+) binding; sequence LVTGGDSGIGRAAAIAYAREGADVA. Position 188 (Ser-188) interacts with substrate. Tyr-201 serves as the catalytic Proton acceptor.

This sequence belongs to the short-chain dehydrogenases/reductases (SDR) family.

This is an uncharacterized protein from Bacillus subtilis (strain 168).